The chain runs to 424 residues: GTPase Obg (424 aa).

The Obg domain occupies 1-158; sequence MFIDTAKILV…RMINLEIKLL (158 aa). The 173-residue stretch at 159–331 folds into the OBG-type G domain; sequence ADVGLIGFPN…LIKEVTRQLS (173 aa). Residues 165–172, 190–194, 212–215, 282–285, and 312–314 contribute to the GTP site; these read GFPNVGKS, FTTLK, DIPG, NKID, and SAA. Serine 172 and threonine 192 together coordinate Mg(2+). An OCT domain is found at 345–424; the sequence is RFMPEEKRFT…LNDFEFDFLL (80 aa).

This sequence belongs to the TRAFAC class OBG-HflX-like GTPase superfamily. OBG GTPase family. As to quaternary structure, monomer. The cofactor is Mg(2+).

The protein resides in the cytoplasm. Its function is as follows. An essential GTPase which binds GTP, GDP and possibly (p)ppGpp with moderate affinity, with high nucleotide exchange rates and a fairly low GTP hydrolysis rate. Plays a role in control of the cell cycle, stress response, ribosome biogenesis and in those bacteria that undergo differentiation, in morphogenesis control. The sequence is that of GTPase Obg from Clostridium novyi (strain NT).